A 345-amino-acid chain; its full sequence is Uroporphyrinogen decarboxylase (345 aa).

Substrate-binding positions include arginine 26–arginine 30, phenylalanine 45, aspartate 75, tyrosine 151, serine 206, and histidine 320.

This sequence belongs to the uroporphyrinogen decarboxylase family. In terms of assembly, homodimer.

The protein resides in the cytoplasm. It catalyses the reaction uroporphyrinogen III + 4 H(+) = coproporphyrinogen III + 4 CO2. It participates in porphyrin-containing compound metabolism; protoporphyrin-IX biosynthesis; coproporphyrinogen-III from 5-aminolevulinate: step 4/4. Its function is as follows. Catalyzes the decarboxylation of four acetate groups of uroporphyrinogen-III to yield coproporphyrinogen-III. This Staphylococcus carnosus (strain TM300) protein is Uroporphyrinogen decarboxylase.